A 243-amino-acid polypeptide reads, in one-letter code: Uridylate kinase (243 aa).

Position 15 to 18 (15 to 18 (KISG)) interacts with ATP. Gly57 is a UMP binding site. Positions 58 and 62 each coordinate ATP. Residues Asp77 and 138-145 (TGNPFFTT) contribute to the UMP site. Thr165, Phe171, and Asp174 together coordinate ATP.

It belongs to the UMP kinase family. In terms of assembly, homohexamer.

It is found in the cytoplasm. The enzyme catalyses UMP + ATP = UDP + ADP. Its pathway is pyrimidine metabolism; CTP biosynthesis via de novo pathway; UDP from UMP (UMPK route): step 1/1. Inhibited by UTP. Catalyzes the reversible phosphorylation of UMP to UDP. The chain is Uridylate kinase from Blochmanniella floridana.